The chain runs to 195 residues: MIIQDVELVKVARTPGDYPPPLKGEVAFVGRSNVGKSSLLNALFNKKIAFVSKTPGKTRSINFYLVNSKYYFVDLPGYGYAKVSKKERMLWKRLVEDYFKNRWSLQMVFLLVDGRIPPQDSDFMMIEWMKSLNIPFTIVLTKMDKVKMSERAKKLEEHQKEFSRYGEYTIIPTSSVTGEGISELLDLISTLLKEN.

Residues 22 to 194 form the EngB-type G domain; that stretch reads LKGEVAFVGR…LDLISTLLKE (173 aa). GTP is bound by residues 30-37, 56-60, 74-77, 141-144, and 173-175; these read GRSNVGKS, GKTRS, DLPG, TKMD, and TSS. Positions 37 and 58 each coordinate Mg(2+).

It belongs to the TRAFAC class TrmE-Era-EngA-EngB-Septin-like GTPase superfamily. EngB GTPase family. It depends on Mg(2+) as a cofactor.

Necessary for normal cell division and for the maintenance of normal septation. The protein is Probable GTP-binding protein EngB of Thermotoga petrophila (strain ATCC BAA-488 / DSM 13995 / JCM 10881 / RKU-1).